Consider the following 223-residue polypeptide: Flagellar L-ring protein (223 aa).

The signal sequence occupies residues 1–18 (MKKSLMALIVVGSFLLSA). Cys-19 carries N-palmitoyl cysteine lipidation. Cys-19 is lipidated: S-diacylglycerol cysteine.

The protein belongs to the FlgH family. In terms of assembly, the basal body constitutes a major portion of the flagellar organelle and consists of four rings (L,P,S, and M) mounted on a central rod.

The protein localises to the cell outer membrane. The protein resides in the bacterial flagellum basal body. Its function is as follows. Assembles around the rod to form the L-ring and probably protects the motor/basal body from shearing forces during rotation. The protein is Flagellar L-ring protein of Herminiimonas arsenicoxydans.